Reading from the N-terminus, the 34-residue chain is Conotoxin de13a (34 aa).

Residues proline 3 and proline 7 each carry the 4-hydroxyproline modification. Tryptophan 14 carries the 6'-bromotryptophan modification. Lysine 18 carries the post-translational modification 5-hydroxylysine. Proline 21 is modified (4-hydroxyproline). Position 25 is a 5-hydroxylysine (lysine 25). Histidine 32 bears the Histidine amide mark.

Contains 4 disulfide bonds. Post-translationally, the diastereomeric form of 5-hydroxylysine found was not conclusively established, but it is probably 5R. Expressed by the venom duct.

The protein localises to the secreted. This is Conotoxin de13a from Conasprella delessertii (Sozon's cone).